The sequence spans 236 residues: Phosphoribosylaminoimidazole-succinocarboxamide synthase (236 aa).

Belongs to the SAICAR synthetase family.

The catalysed reaction is 5-amino-1-(5-phospho-D-ribosyl)imidazole-4-carboxylate + L-aspartate + ATP = (2S)-2-[5-amino-1-(5-phospho-beta-D-ribosyl)imidazole-4-carboxamido]succinate + ADP + phosphate + 2 H(+). Its pathway is purine metabolism; IMP biosynthesis via de novo pathway; 5-amino-1-(5-phospho-D-ribosyl)imidazole-4-carboxamide from 5-amino-1-(5-phospho-D-ribosyl)imidazole-4-carboxylate: step 1/2. The chain is Phosphoribosylaminoimidazole-succinocarboxamide synthase from Pseudomonas syringae pv. tomato (strain ATCC BAA-871 / DC3000).